A 181-amino-acid polypeptide reads, in one-letter code: Probable cobalt-precorrin-6B C(15)-methyltransferase (decarboxylating) (181 aa).

S-adenosyl-L-methionine is bound by residues T16, 40–44 (GCGSG), D61, and A89.

It belongs to the methyltransferase superfamily. Archaeal-type CbiT family.

It carries out the reaction Co-precorrin-6B + S-adenosyl-L-methionine = Co-precorrin-7 + S-adenosyl-L-homocysteine + CO2. The protein operates within cofactor biosynthesis; adenosylcobalamin biosynthesis; cob(II)yrinate a,c-diamide from sirohydrochlorin (anaerobic route): step 8/10. Catalyzes the methylation of C-15 in cobalt-precorrin-6B followed by the decarboxylation of C-12 to form cobalt-precorrin-7. This chain is Probable cobalt-precorrin-6B C(15)-methyltransferase (decarboxylating), found in Methanococcus maripaludis (strain C7 / ATCC BAA-1331).